The primary structure comprises 1368 residues: DNA-directed RNA polymerase subunit beta (1368 aa).

Belongs to the RNA polymerase beta chain family. The RNAP catalytic core consists of 2 alpha, 1 beta, 1 beta' and 1 omega subunit. When a sigma factor is associated with the core the holoenzyme is formed, which can initiate transcription.

The enzyme catalyses RNA(n) + a ribonucleoside 5'-triphosphate = RNA(n+1) + diphosphate. Functionally, DNA-dependent RNA polymerase catalyzes the transcription of DNA into RNA using the four ribonucleoside triphosphates as substrates. This Legionella pneumophila (strain Lens) protein is DNA-directed RNA polymerase subunit beta.